We begin with the raw amino-acid sequence, 140 residues long: Immunity protein RhsIC (140 aa).

Putative immunity protein component of a toxin-immunity protein module, which may function as a cellular contact-dependent growth inhibition (CDI) system. Blocks the toxic effects of expression of the C-terminus (residues 1519-1658) of cognate toxin RhsC in E.coli. This is Immunity protein RhsIC (rhsIC) from Dickeya dadantii (strain 3937) (Erwinia chrysanthemi (strain 3937)).